The sequence spans 584 residues: Cationic amino acid transporter 7, chloroplastic (584 aa).

The transit peptide at 1–49 (MEAQYRNHDGDTSFSSLRVYLNSLSDTPSRFSRRAVSVSTSYDEMSRVR) directs the protein to the chloroplast. The next 14 membrane-spanning stretches (helical) occupy residues 62–82 (WYDL…FVTT), 90–110 (AGPS…LSAF), 131–151 (ITFG…DYVL), 185–205 (GFNE…FVIC), 214–234 (VNMV…VMGF), 254–274 (FFPF…LSYI), 293–313 (IPMG…LMAI), 346–366 (VVGI…MLGQ), 396–416 (ASAF…LNVL), 417–437 (LNLV…AVIF), 449–469 (WPTL…TLVW), 480–500 (FILG…HCVV), 508–528 (FWGV…NIFL), and 540–560 (FGFF…HASY).

The protein belongs to the amino acid-polyamine-organocation (APC) superfamily. Cationic amino acid transporter (CAT) (TC 2.A.3.3) family.

It localises to the plastid. It is found in the chloroplast membrane. Functionally, permease involved in the transport of the cationic amino acids. This is Cationic amino acid transporter 7, chloroplastic (CAT7) from Arabidopsis thaliana (Mouse-ear cress).